The following is a 331-amino-acid chain: Putative peptidyl-prolyl cis-trans isomerase RC0542 (331 aa).

Positions 33–54 (EQTASNNSSTDENQTSINNEPP) are disordered. Positions 128–226 (GHVVTVFYQI…SNEVKIYDDE (99 aa)) constitute a PPIase FKBP-type domain.

It carries out the reaction [protein]-peptidylproline (omega=180) = [protein]-peptidylproline (omega=0). The chain is Putative peptidyl-prolyl cis-trans isomerase RC0542 from Rickettsia conorii (strain ATCC VR-613 / Malish 7).